The sequence spans 206 residues: Holliday junction branch migration complex subunit RuvA (206 aa).

Residues 1 to 64 (MIGKLKGTLD…EDMLRLYGFQ (64 aa)) form a domain I region. A domain II region spans residues 65-144 (SALEREWFRL…AYAGAASGTI (80 aa)). Residues 145-154 (GLKQELGEGV) form a flexible linker region. A domain III region spans residues 154–206 (VAPAPITDAVSALVNLGYSRDTAANAVAAALKTAGEDADASKLIRFGLKELAR).

Belongs to the RuvA family. Homotetramer. Forms an RuvA(8)-RuvB(12)-Holliday junction (HJ) complex. HJ DNA is sandwiched between 2 RuvA tetramers; dsDNA enters through RuvA and exits via RuvB. An RuvB hexamer assembles on each DNA strand where it exits the tetramer. Each RuvB hexamer is contacted by two RuvA subunits (via domain III) on 2 adjacent RuvB subunits; this complex drives branch migration. In the full resolvosome a probable DNA-RuvA(4)-RuvB(12)-RuvC(2) complex forms which resolves the HJ.

Its subcellular location is the cytoplasm. Functionally, the RuvA-RuvB-RuvC complex processes Holliday junction (HJ) DNA during genetic recombination and DNA repair, while the RuvA-RuvB complex plays an important role in the rescue of blocked DNA replication forks via replication fork reversal (RFR). RuvA specifically binds to HJ cruciform DNA, conferring on it an open structure. The RuvB hexamer acts as an ATP-dependent pump, pulling dsDNA into and through the RuvAB complex. HJ branch migration allows RuvC to scan DNA until it finds its consensus sequence, where it cleaves and resolves the cruciform DNA. This is Holliday junction branch migration complex subunit RuvA from Mesorhizobium japonicum (strain LMG 29417 / CECT 9101 / MAFF 303099) (Mesorhizobium loti (strain MAFF 303099)).